The following is a 496-amino-acid chain: Probable serine/threonine-protein kinase DDB_G0284251 (496 aa).

Positions 1-13 are enriched in low complexity; that stretch reads MIEINNNHNNGNG. The disordered stretch occupies residues 1-25; the sequence is MIEINNNHNNGNGKQFPSSQIMPDS. Residues 36–288 form the Protein kinase domain; it reads YTLGEKIGRG…AQELLQHPIF (253 aa). ATP is bound by residues 42 to 50 and lysine 65; that span reads IGRGAFGQV. The active-site Proton acceptor is the aspartate 158. The disordered stretch occupies residues 323 to 345; sequence DWGSSSSTSGSSTPLSSSSSSSN. Residues 353 to 386 adopt a coiled-coil conformation; it reads EDFNKLQTTIKQQAQTISNLSEEILILKKELKEK. The segment at 454 to 496 is disordered; sequence PQLTPSSSRENISLSNSSSSIPNPNQNQNQNNKSKSKKFGFFS. Positions 458-486 are enriched in low complexity; that stretch reads PSSSRENISLSNSSSSIPNPNQNQNQNNK. Basic residues predominate over residues 487 to 496; sequence SKSKKFGFFS.

It belongs to the protein kinase superfamily. STE Ser/Thr protein kinase family. Mg(2+) serves as cofactor.

It catalyses the reaction L-seryl-[protein] + ATP = O-phospho-L-seryl-[protein] + ADP + H(+). It carries out the reaction L-threonyl-[protein] + ATP = O-phospho-L-threonyl-[protein] + ADP + H(+). The sequence is that of Probable serine/threonine-protein kinase DDB_G0284251 from Dictyostelium discoideum (Social amoeba).